Consider the following 79-residue polypeptide: Small proline-rich protein 4 (79 aa).

Low complexity predominate over residues 1–26 (MSSQQQQRQQQQCPPQRAQQQQVKQP). The disordered stretch occupies residues 1-79 (MSSQQQQRQQ…AQQASKSKQK (79 aa)). Residues 66–79 (KCPSAQQASKSKQK) show a composition bias toward polar residues.

It belongs to the cornifin (SPRR) family. Cross-linked to membrane proteins by transglutaminase.

Its subcellular location is the cytoplasm. The protein resides in the cell cortex. Its function is as follows. Cross-linked envelope protein of keratinocytes. Involved in UV-induced cornification. This Homo sapiens (Human) protein is Small proline-rich protein 4 (SPRR4).